The sequence spans 379 residues: Cobalt-precorrin-5B C(1)-methyltransferase (379 aa).

This sequence belongs to the CbiD family.

It carries out the reaction Co-precorrin-5B + S-adenosyl-L-methionine = Co-precorrin-6A + S-adenosyl-L-homocysteine. The protein operates within cofactor biosynthesis; adenosylcobalamin biosynthesis; cob(II)yrinate a,c-diamide from sirohydrochlorin (anaerobic route): step 6/10. Catalyzes the methylation of C-1 in cobalt-precorrin-5B to form cobalt-precorrin-6A. The chain is Cobalt-precorrin-5B C(1)-methyltransferase from Salmonella schwarzengrund (strain CVM19633).